The primary structure comprises 253 residues: Cell division protein ZapD (253 aa).

The protein belongs to the ZapD family. Interacts with FtsZ.

It is found in the cytoplasm. In terms of biological role, cell division factor that enhances FtsZ-ring assembly. Directly interacts with FtsZ and promotes bundling of FtsZ protofilaments, with a reduction in FtsZ GTPase activity. In Bordetella bronchiseptica (strain ATCC BAA-588 / NCTC 13252 / RB50) (Alcaligenes bronchisepticus), this protein is Cell division protein ZapD.